A 102-amino-acid polypeptide reads, in one-letter code: Small ribosomal subunit protein uS10 (102 aa).

This sequence belongs to the universal ribosomal protein uS10 family. Part of the 30S ribosomal subunit.

Functionally, involved in the binding of tRNA to the ribosomes. This chain is Small ribosomal subunit protein uS10, found in Allorhizobium ampelinum (strain ATCC BAA-846 / DSM 112012 / S4) (Agrobacterium vitis (strain S4)).